Here is a 721-residue protein sequence, read N- to C-terminus: Solute carrier family 12 member 8 (721 aa).

Transmembrane regions (helical) follow at residues 53 to 73 (FGTW…VVLF), 84 to 104 (GVLL…VTVL), 115 to 135 (IGSG…VGGT), 136 to 156 (IGVL…TGFA), 174 to 194 (ISLA…KWII), 196 to 216 (LQLL…IGSF), 247 to 267 (FFTV…GFNM), 283 to 303 (LAAI…LGAI), 321 to 341 (LVGG…CMGG), 374 to 394 (PVAA…IGQV), and 397 to 417 (LAPI…YSYF). 2 disordered regions span residues 473-505 (PNHT…KQTL) and 533-580 (NESQ…STVA). A compositionally biased stretch (acidic residues) spans 553–565 (TESDEPDSEEDVD). The next 2 membrane-spanning stretches (helical) occupy residues 606–626 (FLGA…YALV) and 628–648 (LGVA…LNPG).

It belongs to the SLC12A transporter family.

It is found in the membrane. In terms of biological role, cation/chloride cotransporter. This Xenopus laevis (African clawed frog) protein is Solute carrier family 12 member 8 (slc12a8).